Reading from the N-terminus, the 644-residue chain is Exoribonuclease 2 (644 aa).

The region spanning 189-516 is the RNB domain; sequence RQDLTALNFV…NHRLLKAVIK (328 aa). The 83-residue stretch at 561-643 folds into the S1 motif domain; that stretch reads NTRFAAEIID…ETRSIIARPA (83 aa).

It belongs to the RNR ribonuclease family. RNase II subfamily.

It is found in the cytoplasm. The catalysed reaction is Exonucleolytic cleavage in the 3'- to 5'-direction to yield nucleoside 5'-phosphates.. In terms of biological role, involved in mRNA degradation. Hydrolyzes single-stranded polyribonucleotides processively in the 3' to 5' direction. The protein is Exoribonuclease 2 of Salmonella dublin (strain CT_02021853).